The chain runs to 205 residues: Small ribosomal subunit protein uS4 (205 aa).

The 64-residue stretch at 94–157 (SRLDTVVYRM…QQIPLIQESI (64 aa)) folds into the S4 RNA-binding domain.

It belongs to the universal ribosomal protein uS4 family. Part of the 30S ribosomal subunit. Contacts protein S5. The interaction surface between S4 and S5 is involved in control of translational fidelity.

Functionally, one of the primary rRNA binding proteins, it binds directly to 16S rRNA where it nucleates assembly of the body of the 30S subunit. In terms of biological role, with S5 and S12 plays an important role in translational accuracy. This Rickettsia prowazekii (strain Madrid E) protein is Small ribosomal subunit protein uS4.